Reading from the N-terminus, the 196-residue chain is ATP-dependent Clp protease proteolytic subunit (196 aa).

Residue Ser96 is the Nucleophile of the active site. His121 is an active-site residue.

This sequence belongs to the peptidase S14 family. In terms of assembly, fourteen ClpP subunits assemble into 2 heptameric rings which stack back to back to give a disk-like structure with a central cavity, resembling the structure of eukaryotic proteasomes.

It localises to the cytoplasm. It catalyses the reaction Hydrolysis of proteins to small peptides in the presence of ATP and magnesium. alpha-casein is the usual test substrate. In the absence of ATP, only oligopeptides shorter than five residues are hydrolyzed (such as succinyl-Leu-Tyr-|-NHMec, and Leu-Tyr-Leu-|-Tyr-Trp, in which cleavage of the -Tyr-|-Leu- and -Tyr-|-Trp bonds also occurs).. Functionally, cleaves peptides in various proteins in a process that requires ATP hydrolysis. Has a chymotrypsin-like activity. Plays a major role in the degradation of misfolded proteins. The protein is ATP-dependent Clp protease proteolytic subunit of Streptococcus salivarius.